The sequence spans 389 residues: Chaperone protein DnaJ (389 aa).

The region spanning 6–70 (DYYEVLGLAK…QKKAAYDQYG (65 aa)) is the J domain. The CR-type zinc finger occupies 142–224 (GVEKEIKYNR…CHGTGHEKKA (83 aa)). Residues Cys-155, Cys-158, Cys-172, Cys-175, Cys-198, Cys-201, Cys-212, and Cys-215 each contribute to the Zn(2+) site. CXXCXGXG motif repeat units follow at residues 155–162 (CATCGGNG), 172–179 (CHKCHGSG), 198–205 (CDVCHGTG), and 212–219 (CPTCHGTG).

The protein belongs to the DnaJ family. Homodimer. It depends on Zn(2+) as a cofactor.

The protein localises to the cytoplasm. Its function is as follows. Participates actively in the response to hyperosmotic and heat shock by preventing the aggregation of stress-denatured proteins and by disaggregating proteins, also in an autonomous, DnaK-independent fashion. Unfolded proteins bind initially to DnaJ; upon interaction with the DnaJ-bound protein, DnaK hydrolyzes its bound ATP, resulting in the formation of a stable complex. GrpE releases ADP from DnaK; ATP binding to DnaK triggers the release of the substrate protein, thus completing the reaction cycle. Several rounds of ATP-dependent interactions between DnaJ, DnaK and GrpE are required for fully efficient folding. Also involved, together with DnaK and GrpE, in the DNA replication of plasmids through activation of initiation proteins. This Enterococcus faecalis (strain ATCC 700802 / V583) protein is Chaperone protein DnaJ.